A 467-amino-acid chain; its full sequence is MKFWRPGITGKLFLAIFATCIVLLISMHWAVRISFERGFIDYIKHGNEQRLQLLSDALGEQYAQHGNWRFLRNNDRFVFQILRSFEHDNSEDKPGPGMPPHGWRTQFWVVDQNNKVLVGPRAPIPPDGTRRPILVNGAEVGAVIASPVERLTRNTDINFDKQQRQTSWLIVALATLLAALATFLLARGLLAPVKRLVDGTHKLAAGDFTTRVTPTSEDELGKLAQDFNQLASTLEKNQQMRRDFMADISHELRTPLAVLRGELEAIQDGVRKFTPETVASLQAEVGTLTKLVDDLHQLSMSDEGALAYQKAPVDLIPLLEVAGGAFRERFASRGLKLQFSLPDSITVFGDRDRLMQLFNNLLENSLRYTDSGGSLQISAGQRDKTVRLTFADSAPGVSDDQLQKLFERFYRTEGSRNRASGGSGLGLAICLNIVEAHNGRIIAAHSPFGGVSITVELPLERDLQREV.

The Cytoplasmic portion of the chain corresponds to 1 to 11 (MKFWRPGITGK). The helical transmembrane segment at 12-32 (LFLAIFATCIVLLISMHWAVR) threads the bilayer. The Periplasmic portion of the chain corresponds to 33–167 (ISFERGFIDY…NFDKQQRQTS (135 aa)). The chain crosses the membrane as a helical span at residues 168-186 (WLIVALATLLAALATFLLA). One can recognise an HAMP domain in the interval 187–239 (RGLLAPVKRLVDGTHKLAAGDFTTRVTPTSEDELGKLAQDFNQLASTLEKNQQ). Topologically, residues 187–467 (RGLLAPVKRL…PLERDLQREV (281 aa)) are cytoplasmic. Residues 247–461 (DISHELRTPL…SITVELPLER (215 aa)) enclose the Histidine kinase domain. H250 bears the Phosphohistidine; by autocatalysis mark.

Post-translationally, autophosphorylated.

It localises to the cell inner membrane. The enzyme catalyses ATP + protein L-histidine = ADP + protein N-phospho-L-histidine.. In terms of biological role, member of the two-component regulatory system BaeS/BaeR which responds to envelope stress. Activates expression of periplasmic chaperone spy in response to spheroplast formation, indole and P pili protein PapG overexpression. Activates BaeR by phosphorylation which then activates the mdtABCD and probably the CRISPR-Cas casABCDE-ygbT-ygbF operons. The sequence is that of Signal transduction histidine-protein kinase BaeS from Escherichia coli (strain K12).